A 494-amino-acid chain; its full sequence is Glutamate--tRNA ligase (494 aa).

The short motif at 15–25 (PSPTGNPHVGL) is the 'HIGH' region element. Zn(2+)-binding residues include Cys112, Cys114, Cys139, and Glu141. A 'KMSKS' region motif is present at residues 260–264 (KLSKR). ATP is bound at residue Lys263.

This sequence belongs to the class-I aminoacyl-tRNA synthetase family. Glutamate--tRNA ligase type 1 subfamily. Monomer. Zn(2+) serves as cofactor.

The protein localises to the cytoplasm. It carries out the reaction tRNA(Glu) + L-glutamate + ATP = L-glutamyl-tRNA(Glu) + AMP + diphosphate. Functionally, catalyzes the attachment of glutamate to tRNA(Glu) in a two-step reaction: glutamate is first activated by ATP to form Glu-AMP and then transferred to the acceptor end of tRNA(Glu). The protein is Glutamate--tRNA ligase of Streptomyces coelicolor (strain ATCC BAA-471 / A3(2) / M145).